We begin with the raw amino-acid sequence, 517 residues long: GMP synthase [glutamine-hydrolyzing] (517 aa).

Residues 11–202 (KIIVLDFGSQ…AFDVCGAKDN (192 aa)) form the Glutamine amidotransferase type-1 domain. The active-site Nucleophile is C88. Residues H176 and E178 contribute to the active site. A GMPS ATP-PPase domain is found at 203-392 (WTMDDFIKLS…LGLPHDLVWR (190 aa)). An ATP-binding site is contributed by 230-236 (SGGVDSS).

Homodimer.

The enzyme catalyses XMP + L-glutamine + ATP + H2O = GMP + L-glutamate + AMP + diphosphate + 2 H(+). It participates in purine metabolism; GMP biosynthesis; GMP from XMP (L-Gln route): step 1/1. Its function is as follows. Catalyzes the synthesis of GMP from XMP. In Lactobacillus delbrueckii subsp. bulgaricus (strain ATCC 11842 / DSM 20081 / BCRC 10696 / JCM 1002 / NBRC 13953 / NCIMB 11778 / NCTC 12712 / WDCM 00102 / Lb 14), this protein is GMP synthase [glutamine-hydrolyzing].